A 753-amino-acid polypeptide reads, in one-letter code: MTILNHTLGFPRVGLRRELKKAQESYWAGNSTREELLAVGRELRARHWDQQKQAGIDLLPVGDFAWYDHVLTTSLLLGNVPARHQNNDGSVDIDTLFRIGRGRAPTGEPAAAAEMTKWFNTNYHYMVPEFVKGQQFKLTWTQLLEEVDEALALGHKVKPVLLGPVTYLWLGKVKGEQFDRLSLLNDILPVYQQVLAELAKRGIEWVQIDEPALVLELPQAWLDAYKPAYDALQGQVKLLLTTYFEGVTPNLDTITALPVQGLHVDLVHGKDDVAELHKRLPSEWLLSAGLINGRNVWRADLTEKYAQIKDIVGKRDLWVASSCSLLHSPIDLSVETRLDAEVKSWFAFALQKCHELALLRDALNSGDTAALAAWSAPIQARRHSTRVHNPAVEKRLAAITAQDSQRANVYEVRAEAQRARFKLPAWPTTTIGSFPQTTEIRTLRLDFKKGNLDANNYRTGIAEHIKQAIVEQERLGLDVLVHGEAERNDMVEYFGEHLDGFVFTQNGWVQSYGSRCVKPPIVIGDVSRPAPITVEWAKYAQSLTDKPVKGMLTGPVTILCWSFPREDVSRETIAKQIALALRDEVADLEAAGIGIIQIDEPALREGLPLRRSDWDAYLQWGVEAFRINAAVAKDDTQIHTHMCYCEFNDIMDSIAALDADVITIETSRSDMELLESFEEFDYPNEIGPGVYDIHSPNVPSVEWIEALLKKAAKRIPAERLWVNPDCGLKTRGWPETRAALANMVQAAQNLRRG.

5-methyltetrahydropteroyltri-L-glutamate contacts are provided by residues 17-20 (RELK) and Lys-117. L-homocysteine-binding positions include 431–433 (IGS) and Glu-484. L-methionine is bound by residues 431 to 433 (IGS) and Glu-484. Residues 515 to 516 (RC) and Trp-561 each bind 5-methyltetrahydropteroyltri-L-glutamate. Position 599 (Asp-599) interacts with L-homocysteine. Asp-599 is a binding site for L-methionine. Glu-605 contacts 5-methyltetrahydropteroyltri-L-glutamate. Residues His-641, Cys-643, and Glu-665 each coordinate Zn(2+). The active-site Proton donor is His-694. Cys-726 provides a ligand contact to Zn(2+).

This sequence belongs to the vitamin-B12 independent methionine synthase family. Requires Zn(2+) as cofactor.

The catalysed reaction is 5-methyltetrahydropteroyltri-L-glutamate + L-homocysteine = tetrahydropteroyltri-L-glutamate + L-methionine. It participates in amino-acid biosynthesis; L-methionine biosynthesis via de novo pathway; L-methionine from L-homocysteine (MetE route): step 1/1. Catalyzes the transfer of a methyl group from 5-methyltetrahydrofolate to homocysteine resulting in methionine formation. In Escherichia coli O7:K1 (strain IAI39 / ExPEC), this protein is 5-methyltetrahydropteroyltriglutamate--homocysteine methyltransferase.